Reading from the N-terminus, the 204-residue chain is Histidine biosynthesis bifunctional protein HisIE (204 aa).

A phosphoribosyl-AMP cyclohydrolase region spans residues 1–114 (MLTEQQINQL…FAPAASDWSF (114 aa)). The phosphoribosyl-ATP pyrophosphohydrolase stretch occupies residues 115 to 204 (LYQLEQLLAS…IGRLRERHEK (90 aa)).

This sequence in the N-terminal section; belongs to the PRA-CH family. It in the C-terminal section; belongs to the PRA-PH family.

It localises to the cytoplasm. It catalyses the reaction 1-(5-phospho-beta-D-ribosyl)-ATP + H2O = 1-(5-phospho-beta-D-ribosyl)-5'-AMP + diphosphate + H(+). The enzyme catalyses 1-(5-phospho-beta-D-ribosyl)-5'-AMP + H2O = 1-(5-phospho-beta-D-ribosyl)-5-[(5-phospho-beta-D-ribosylamino)methylideneamino]imidazole-4-carboxamide. It functions in the pathway amino-acid biosynthesis; L-histidine biosynthesis; L-histidine from 5-phospho-alpha-D-ribose 1-diphosphate: step 2/9. It participates in amino-acid biosynthesis; L-histidine biosynthesis; L-histidine from 5-phospho-alpha-D-ribose 1-diphosphate: step 3/9. In Yersinia pestis, this protein is Histidine biosynthesis bifunctional protein HisIE (hisI).